We begin with the raw amino-acid sequence, 431 residues long: Adenylosuccinate synthetase (431 aa).

GTP-binding positions include G13–K19 and G41–T43. D14 functions as the Proton acceptor in the catalytic mechanism. The Mg(2+) site is built by D14 and G41. Residues D14–K17, N39–H42, T130, R144, Q225, T240, and R304 contribute to the IMP site. Residue H42 is the Proton donor of the active site. A300–R306 provides a ligand contact to substrate. GTP is bound by residues R306, K332–D334, and S415–G417.

Belongs to the adenylosuccinate synthetase family. As to quaternary structure, homodimer. Mg(2+) is required as a cofactor.

It is found in the cytoplasm. The catalysed reaction is IMP + L-aspartate + GTP = N(6)-(1,2-dicarboxyethyl)-AMP + GDP + phosphate + 2 H(+). The protein operates within purine metabolism; AMP biosynthesis via de novo pathway; AMP from IMP: step 1/2. In terms of biological role, plays an important role in the de novo pathway of purine nucleotide biosynthesis. Catalyzes the first committed step in the biosynthesis of AMP from IMP. This chain is Adenylosuccinate synthetase, found in Shewanella oneidensis (strain ATCC 700550 / JCM 31522 / CIP 106686 / LMG 19005 / NCIMB 14063 / MR-1).